Here is an 86-residue protein sequence, read N- to C-terminus: Conotoxin Ec15a (86 aa).

Residues 1–23 form the signal peptide; sequence MEKLTILILVATVLLAIQVLGQG. A propeptide spanning residues 24 to 49 is cleaved from the precursor; the sequence is EGEKPPKEWVQQYAAKRLWALMKGPR. Q50 is modified (pyrrolidone carboxylic acid).

The protein belongs to the conotoxin O2 superfamily. Contains 4 disulfide bonds. In terms of tissue distribution, expressed by the venom duct.

The protein resides in the secreted. The chain is Conotoxin Ec15a from Conus emaciatus (False virgin cone).